Reading from the N-terminus, the 105-residue chain is Large ribosomal subunit protein eL36 (105 aa).

It belongs to the eukaryotic ribosomal protein eL36 family. In terms of assembly, component of the large ribosomal subunit.

Its subcellular location is the cytoplasm. It is found in the cytosol. In terms of biological role, component of the large ribosomal subunit. The ribosome is a large ribonucleoprotein complex responsible for the synthesis of proteins in the cell. This is Large ribosomal subunit protein eL36 (rpl36) from Xenopus laevis (African clawed frog).